The primary structure comprises 788 residues: Protein kintoun (788 aa).

3 disordered regions span residues 194–249, 415–438, and 628–754; these read LRKP…SEQD, NNSE…EISP, and HKEH…SSSV. The span at 225–241 shows a compositional bias: basic and acidic residues; sequence GKEKKDQKRVIKEEHKQ. Polar residues predominate over residues 417 to 427; it reads SEGLTSESNLD. Basic and acidic residues-rich tracts occupy residues 628–644 and 667–682; these read HKEH…DVGV and ENTE…RYEE. Composition is skewed to polar residues over residues 685 to 701 and 744 to 754; these read STSC…QKDS and NFDSRPASSSV.

The protein belongs to the PIH1 family. Kintoun subfamily.

Its subcellular location is the cytoplasm. It localises to the dynein axonemal particle. Functionally, required for cytoplasmic pre-assembly of axonemal dyneins, thereby playing a central role in motility in cilia and flagella. Involved in pre-assembly of dynein arm complexes in the cytoplasm before intraflagellar transport loads them for the ciliary compartment. The polypeptide is Protein kintoun (Xenopus laevis (African clawed frog)).